The primary structure comprises 332 residues: Probable cation efflux system protein MT2084 (332 aa).

The next 5 helical transmembrane spans lie at Ile46–Gly66, Ile75–Ala95, Ala113–Ile133, Val145–Tyr165, and Val202–Leu222.

It belongs to the cation diffusion facilitator (CDF) transporter (TC 2.A.4) family.

It localises to the cell membrane. This is Probable cation efflux system protein MT2084 from Mycobacterium tuberculosis (strain CDC 1551 / Oshkosh).